The chain runs to 168 residues: G/U mismatch-specific DNA glycosylase (168 aa).

It belongs to the uracil-DNA glycosylase (UDG) superfamily. TDG/mug family. Binds DNA as a monomer.

The protein localises to the cytoplasm. It carries out the reaction Specifically hydrolyzes mismatched double-stranded DNA and polynucleotides, releasing free uracil.. Excises ethenocytosine and uracil, which can arise by alkylation or deamination of cytosine, respectively, from the corresponding mispairs with guanine in ds-DNA. It is capable of hydrolyzing the carbon-nitrogen bond between the sugar-phosphate backbone of the DNA and the mispaired base. The complementary strand guanine functions in substrate recognition. Required for DNA damage lesion repair in stationary-phase cells. The polypeptide is G/U mismatch-specific DNA glycosylase (Enterobacter sp. (strain 638)).